The primary structure comprises 254 residues: Ribonuclease PH (254 aa).

Phosphate-binding positions include Arg86 and 124-126 (GTR).

This sequence belongs to the RNase PH family. Homohexameric ring arranged as a trimer of dimers.

The enzyme catalyses tRNA(n+1) + phosphate = tRNA(n) + a ribonucleoside 5'-diphosphate. Its function is as follows. Phosphorolytic 3'-5' exoribonuclease that plays an important role in tRNA 3'-end maturation. Removes nucleotide residues following the 3'-CCA terminus of tRNAs; can also add nucleotides to the ends of RNA molecules by using nucleoside diphosphates as substrates, but this may not be physiologically important. Probably plays a role in initiation of 16S rRNA degradation (leading to ribosome degradation) during starvation. The chain is Ribonuclease PH from Carboxydothermus hydrogenoformans (strain ATCC BAA-161 / DSM 6008 / Z-2901).